We begin with the raw amino-acid sequence, 253 residues long: Adenosylcobinamide-GDP ribazoletransferase (253 aa).

4 helical membrane passes run 33-53, 106-126, 132-152, and 178-198; these read ISPIIVGISLGLIESVAYLIL, VGSGGIGLLLVYLSIQIVALL, LYTIFYLISSNVLSMSLSLYI, and ILLLELIPFISLYNVIVFIIF.

This sequence belongs to the CobS family. The cofactor is Mg(2+).

The protein localises to the cell membrane. It carries out the reaction alpha-ribazole + adenosylcob(III)inamide-GDP = adenosylcob(III)alamin + GMP + H(+). The catalysed reaction is alpha-ribazole 5'-phosphate + adenosylcob(III)inamide-GDP = adenosylcob(III)alamin 5'-phosphate + GMP + H(+). Its pathway is cofactor biosynthesis; adenosylcobalamin biosynthesis; adenosylcobalamin from cob(II)yrinate a,c-diamide: step 7/7. Its function is as follows. Joins adenosylcobinamide-GDP and alpha-ribazole to generate adenosylcobalamin (Ado-cobalamin). Also synthesizes adenosylcobalamin 5'-phosphate from adenosylcobinamide-GDP and alpha-ribazole 5'-phosphate. The polypeptide is Adenosylcobinamide-GDP ribazoletransferase (Saccharolobus solfataricus (strain ATCC 35092 / DSM 1617 / JCM 11322 / P2) (Sulfolobus solfataricus)).